The sequence spans 286 residues: Undecaprenyl-diphosphatase (286 aa).

7 consecutive transmembrane segments (helical) span residues 43-63, 91-111, 118-138, 150-170, 189-209, 236-256, and 264-284; these read FWKMFSIVIQLGAILCLPIYF, LTIIAFLCTAIPAFLFTKIIG, IIMGSALLIGGIVMWIVDVMF, MSVGQAIWIGLCQVLSAVFPG, AAALEFSFFLSIPTMVVATCY, ITLAIGFIVSFIVAYFVVAWF, and GFVPFAVYRIVVGIAVLAWAL.

The protein belongs to the UppP family.

Its subcellular location is the cell inner membrane. The enzyme catalyses di-trans,octa-cis-undecaprenyl diphosphate + H2O = di-trans,octa-cis-undecaprenyl phosphate + phosphate + H(+). Its function is as follows. Catalyzes the dephosphorylation of undecaprenyl diphosphate (UPP). Confers resistance to bacitracin. This is Undecaprenyl-diphosphatase from Koribacter versatilis (strain Ellin345).